Here is a 264-residue protein sequence, read N- to C-terminus: Rhamnosyltransferase WbbL (264 aa).

It belongs to the glycosyltransferase 2 family.

Its pathway is bacterial outer membrane biogenesis; lipopolysaccharide biosynthesis. Functionally, rhamnosyltransferase involved in lipopolysaccharide biosynthesis. The polypeptide is Rhamnosyltransferase WbbL (wbbL) (Escherichia coli (strain K12)).